Here is a 209-residue protein sequence, read N- to C-terminus: Large ribosomal subunit protein uL4 (209 aa).

Residues 46–76 (RGTASTKTRGEVSGGGRKPWRQKGTGRARHG) form a disordered region. Residues 63–76 (KPWRQKGTGRARHG) are compositionally biased toward basic residues.

It belongs to the universal ribosomal protein uL4 family. Part of the 50S ribosomal subunit.

Functionally, one of the primary rRNA binding proteins, this protein initially binds near the 5'-end of the 23S rRNA. It is important during the early stages of 50S assembly. It makes multiple contacts with different domains of the 23S rRNA in the assembled 50S subunit and ribosome. Forms part of the polypeptide exit tunnel. This chain is Large ribosomal subunit protein uL4, found in Halothermothrix orenii (strain H 168 / OCM 544 / DSM 9562).